A 399-amino-acid chain; its full sequence is MIKKELPDEFGHFGPYGGMFVADTLVHALKQLEHAYTKYRNDQDFLSELHTELKDYVGRPNPLYHAVHLSKKIGGAQIYLKREDLNHTGAHKINNTIGQALLAKRMGKTRVIAETGAGQHGVATATVAAKFGFQCVVYMGSEDIKRQSSNVYRMKLLGAEVVPVTSGSKTLKDALNEALRDWVSHVDDTFYIIGTVAGPHPYPQMVRDFQAIIGVEARAQHMEKTGHLPDALVACVGGGSNAIGLFYPFLNDQSVMIYGVEAGGKGIETGEHSASLIAGKPGVLHGNRTYLLCDEYGQVKDTHSVSAGLDYPGVGPEHAYLKDTGRVIYKAINDSEAMDAFRLLTHTEGIIPALESSHAVAYAIQLAKTMSKEQSIIVNLSGRGDKDMHTVAAIDGITI.

Lys92 carries the N6-(pyridoxal phosphate)lysine modification.

Belongs to the TrpB family. In terms of assembly, tetramer of two alpha and two beta chains. It depends on pyridoxal 5'-phosphate as a cofactor.

It catalyses the reaction (1S,2R)-1-C-(indol-3-yl)glycerol 3-phosphate + L-serine = D-glyceraldehyde 3-phosphate + L-tryptophan + H2O. The protein operates within amino-acid biosynthesis; L-tryptophan biosynthesis; L-tryptophan from chorismate: step 5/5. Functionally, the beta subunit is responsible for the synthesis of L-tryptophan from indole and L-serine. This chain is Tryptophan synthase beta chain, found in Legionella pneumophila subsp. pneumophila (strain Philadelphia 1 / ATCC 33152 / DSM 7513).